Here is a 144-residue protein sequence, read N- to C-terminus: Large ribosomal subunit protein uL11 (144 aa).

This sequence belongs to the universal ribosomal protein uL11 family. As to quaternary structure, part of the ribosomal stalk of the 50S ribosomal subunit. Interacts with L10 and the large rRNA to form the base of the stalk. L10 forms an elongated spine to which L12 dimers bind in a sequential fashion forming a multimeric L10(L12)X complex. In terms of processing, one or more lysine residues are methylated.

In terms of biological role, forms part of the ribosomal stalk which helps the ribosome interact with GTP-bound translation factors. This is Large ribosomal subunit protein uL11 from Acidiphilium cryptum (strain JF-5).